A 498-amino-acid polypeptide reads, in one-letter code: Probable cytosol aminopeptidase (498 aa).

Mn(2+)-binding residues include lysine 262 and aspartate 267. Lysine 274 is a catalytic residue. The Mn(2+) site is built by aspartate 285, aspartate 344, and glutamate 346. Arginine 348 is an active-site residue.

Belongs to the peptidase M17 family. The cofactor is Mn(2+).

The protein resides in the cytoplasm. The catalysed reaction is Release of an N-terminal amino acid, Xaa-|-Yaa-, in which Xaa is preferably Leu, but may be other amino acids including Pro although not Arg or Lys, and Yaa may be Pro. Amino acid amides and methyl esters are also readily hydrolyzed, but rates on arylamides are exceedingly low.. It carries out the reaction Release of an N-terminal amino acid, preferentially leucine, but not glutamic or aspartic acids.. In terms of biological role, presumably involved in the processing and regular turnover of intracellular proteins. Catalyzes the removal of unsubstituted N-terminal amino acids from various peptides. The chain is Probable cytosol aminopeptidase from Phytoplasma mali (strain AT).